The following is a 289-amino-acid chain: uncharacterized protein (289 aa).

One can recognise an HTH lysR-type domain in the interval 1 to 58 (MDEKDWILLKILHEEQSVTKTAERLFTSQPSITYRLKKIEEIFGIELFTKRHKGITFT). The segment at residues 18–37 (VTKTAERLFTSQPSITYRLK) is a DNA-binding region (H-T-H motif).

Belongs to the LysR transcriptional regulatory family.

This is an uncharacterized protein from Bacillus subtilis (strain 168).